The sequence spans 182 residues: Peptidyl-tRNA hydrolase (182 aa).

Tyr-14 lines the tRNA pocket. The active-site Proton acceptor is His-19. TRNA-binding residues include Phe-60, Asn-62, and Asn-106.

Belongs to the PTH family. In terms of assembly, monomer.

It is found in the cytoplasm. It catalyses the reaction an N-acyl-L-alpha-aminoacyl-tRNA + H2O = an N-acyl-L-amino acid + a tRNA + H(+). Hydrolyzes ribosome-free peptidyl-tRNAs (with 1 or more amino acids incorporated), which drop off the ribosome during protein synthesis, or as a result of ribosome stalling. In terms of biological role, catalyzes the release of premature peptidyl moieties from peptidyl-tRNA molecules trapped in stalled 50S ribosomal subunits, and thus maintains levels of free tRNAs and 50S ribosomes. This Campylobacter concisus (strain 13826) protein is Peptidyl-tRNA hydrolase.